A 430-amino-acid polypeptide reads, in one-letter code: Tektin-2 (430 aa).

Coiled coils occupy residues 81-162 (CLTD…FEKL) and 265-379 (FRKR…DIAC).

Belongs to the tektin family. Microtubule inner protein component of sperm flagellar doublet microtubules. May interact with CCDC172. Post-translationally, tyrosine phosphorylated. Ubiquitinated, leading to its degradation. Deubiquitinated by USP16, promoting its stability. In terms of tissue distribution, expressed in trachea multiciliated cells.

The protein localises to the cytoplasm. The protein resides in the cytoskeleton. It is found in the cilium axoneme. Its subcellular location is the flagellum axoneme. It localises to the microtubule organizing center. In terms of biological role, microtubule inner protein (MIP) part of the dynein-decorated doublet microtubules (DMTs) in cilia and flagellar axoneme. Plays a key role in the assembly or attachment of the inner dynein arm to microtubules in sperm flagella and tracheal cilia. Forms filamentous polymers in the walls of ciliary and flagellar microtubules. The sequence is that of Tektin-2 (TEKT2) from Bos taurus (Bovine).